Reading from the N-terminus, the 137-residue chain is Small ribosomal subunit protein uS12 (137 aa).

The interval 1 to 44 (MPTINQLVRKGRKSRTSKSDAPALNFGYNSMKKKATDNPAPQKR) is disordered. The residue at position 102 (aspartate 102) is a 3-methylthioaspartic acid.

The protein belongs to the universal ribosomal protein uS12 family. In terms of assembly, part of the 30S ribosomal subunit. Contacts proteins S8 and S17. May interact with IF1 in the 30S initiation complex.

With S4 and S5 plays an important role in translational accuracy. Its function is as follows. Interacts with and stabilizes bases of the 16S rRNA that are involved in tRNA selection in the A site and with the mRNA backbone. Located at the interface of the 30S and 50S subunits, it traverses the body of the 30S subunit contacting proteins on the other side and probably holding the rRNA structure together. The combined cluster of proteins S8, S12 and S17 appears to hold together the shoulder and platform of the 30S subunit. In Latilactobacillus sakei subsp. sakei (strain 23K) (Lactobacillus sakei subsp. sakei), this protein is Small ribosomal subunit protein uS12.